We begin with the raw amino-acid sequence, 205 residues long: MSNIVWHQHSVDQADRAKLKGQNPVLLWFTGLSGAGKSTLAGALERALFDAGFHTYLLDGDNVRHGLCKDLGFSVADRDENLRRVGEVAKLMVDAGLVVLSAFISPTREERDSIRARFPEGQFIEVHVSTPLSICEQRDPKGLYVKARRGEISNFTGISSPYEAPLSAELTIDTSKGDLASQVRALIDYLTAIEVINPSRLTASA.

31–38 is an ATP binding site; that stretch reads GLSGAGKS. Ser105 acts as the Phosphoserine intermediate in catalysis.

It belongs to the APS kinase family.

The catalysed reaction is adenosine 5'-phosphosulfate + ATP = 3'-phosphoadenylyl sulfate + ADP + H(+). Its pathway is sulfur metabolism; hydrogen sulfide biosynthesis; sulfite from sulfate: step 2/3. Its function is as follows. Catalyzes the synthesis of activated sulfate. This is Adenylyl-sulfate kinase from Shewanella sp. (strain MR-7).